The following is a 100-amino-acid chain: ATP phosphoribosyltransferase (100 aa).

Belongs to the ATP phosphoribosyltransferase family. Long subfamily. As to quaternary structure, equilibrium between an active dimeric form, an inactive hexameric form and higher aggregates. Interconversion between the various forms is largely reversible and is influenced by the natural substrates and inhibitors of the enzyme. It depends on Mg(2+) as a cofactor.

It is found in the cytoplasm. The enzyme catalyses 1-(5-phospho-beta-D-ribosyl)-ATP + diphosphate = 5-phospho-alpha-D-ribose 1-diphosphate + ATP. It participates in amino-acid biosynthesis; L-histidine biosynthesis; L-histidine from 5-phospho-alpha-D-ribose 1-diphosphate: step 1/9. With respect to regulation, feedback inhibited by histidine. In terms of biological role, catalyzes the condensation of ATP and 5-phosphoribose 1-diphosphate to form N'-(5'-phosphoribosyl)-ATP (PR-ATP). Has a crucial role in the pathway because the rate of histidine biosynthesis seems to be controlled primarily by regulation of HisG enzymatic activity. The sequence is that of ATP phosphoribosyltransferase (hisG) from Klebsiella pneumoniae.